The chain runs to 319 residues: uncharacterized protein (319 aa).

Residues 270–290 (AAALWWIPAWLAMIVEVAVLG) form a helical membrane-spanning segment.

It localises to the membrane. This is an uncharacterized protein from Mycobacterium tuberculosis (strain CDC 1551 / Oshkosh).